Reading from the N-terminus, the 406-residue chain is Collagen and calcium-binding EGF domain-containing protein 1 (406 aa).

An N-terminal signal peptide occupies residues 1 to 34; the sequence is MVPPPPSRGGAARGQLGRSLGPLLLLLALGHTWT. The region spanning 134–175 is the EGF-like; calcium-binding domain; sequence DIDECASSNGTLCAHICINTLGSYRCECREGYIREDDGKTCT. Intrachain disulfides connect cysteine 138–cysteine 150, cysteine 146–cysteine 159, and cysteine 161–cysteine 174. The N-linked (GlcNAc...) asparagine glycan is linked to asparagine 142. Asparagine 182 carries an N-linked (GlcNAc...) asparagine glycan. 2 disordered regions span residues 244–335 and 360–406; these read YLPG…PGSF and RTHS…DFYP. Collagen-like domains lie at 245–290 and 300–333; these read LPGP…PMGP and GRRGPVGPPGAPGRDGSKGERGAPGPRGSPGPPG. Positions 270–279 are enriched in pro residues; the sequence is PGMPGPPGQP. Over residues 281-292 the composition is skewed to low complexity; that stretch reads PRGSMGPMGPSP. O-linked (Xyl...) (chondroitin sulfate) serine glycosylation is present at serine 385. A compositionally biased stretch (basic and acidic residues) spans 386–406; that stretch reads GDDHPRRTETRDLRAPRDFYP.

It belongs to the CCBE1 family. In terms of tissue distribution, detected in fibroblasts and urine (at protein level). Not expressed in blood or lymphatic endothelial cells.

The protein localises to the secreted. In terms of biological role, required for lymphangioblast budding and angiogenic sprouting from venous endothelium during embryogenesis. This is Collagen and calcium-binding EGF domain-containing protein 1 (CCBE1) from Homo sapiens (Human).